A 548-amino-acid polypeptide reads, in one-letter code: Probable zinc metalloprotease EGY1, chloroplastic (548 aa).

A chloroplast-targeting transit peptide spans 1–18 (MGTLTSVAFAAAVNIRFR). Positions 61 to 76 (NSNRDDSIGENGETHK) are enriched in basic and acidic residues. The disordered stretch occupies residues 61-116 (NSNRDDSIGENGETHKSSVVKTATFEEEDEETSKSSSTTSSSNEFGSDKTSMPSTI). Over residues 103 to 116 (NEFGSDKTSMPSTI) the composition is skewed to polar residues. The next 8 helical transmembrane spans lie at 242 to 262 (YVIA…LGIA), 290 to 310 (LYPF…ILLF), 326 to 346 (LSIP…ITQF), 361 to 381 (LAGP…GLFL), 388 to 408 (ANDL…LGLI), 416 to 436 (AALH…WCGL), 474 to 494 (MLGL…YVLI), and 516 to 536 (ALVG…WDEL).

The protein belongs to the peptidase M50B family. Expressed in roots, leaves, cotyledons, hypocotyls, stems, flowers and siliques.

The protein resides in the plastid. It localises to the chloroplast membrane. In terms of biological role, membrane-associated and ATP-independent metalloprotease required for development of both thylakoid grana and well-organized lamellae in chloroplast. Required for the accumulation of chlorophyll and chlorophyll a/b binding (CAB) proteins (from both PS I and PS II) in chloroplast membranes, and for grana formation and normal chloroplast development. Involved in the regulation of nuclear gene expression in response to ammonium stress and interacts with ABA signaling. Carries out beta-casein degradation in an ATP-independent manner in vitro. The protein is Probable zinc metalloprotease EGY1, chloroplastic (EGY1) of Arabidopsis thaliana (Mouse-ear cress).